Here is a 312-residue protein sequence, read N- to C-terminus: Methionyl-tRNA formyltransferase (312 aa).

Position 109-112 (109-112 (SLLP)) interacts with (6S)-5,6,7,8-tetrahydrofolate.

It belongs to the Fmt family.

The catalysed reaction is L-methionyl-tRNA(fMet) + (6R)-10-formyltetrahydrofolate = N-formyl-L-methionyl-tRNA(fMet) + (6S)-5,6,7,8-tetrahydrofolate + H(+). Its function is as follows. Attaches a formyl group to the free amino group of methionyl-tRNA(fMet). The formyl group appears to play a dual role in the initiator identity of N-formylmethionyl-tRNA by promoting its recognition by IF2 and preventing the misappropriation of this tRNA by the elongation apparatus. This is Methionyl-tRNA formyltransferase from Listeria monocytogenes serotype 4a (strain HCC23).